The sequence spans 160 residues: Putative flagellin YvzB (160 aa).

This sequence belongs to the bacterial flagellin family. Interacts with FliW.

It localises to the bacterial flagellum. The sequence is that of Putative flagellin YvzB (yvzB) from Bacillus subtilis (strain 168).